The primary structure comprises 190 residues: CASP-like protein 2U2 (190 aa).

Residues 1–10 (MGEKMQGFQG) lie on the Cytoplasmic side of the membrane. The helical transmembrane segment at 11–31 (WSIGIRFLTSCVSIASLILLL) threads the bilayer. The Extracellular portion of the chain corresponds to 32-59 (KSKQTVQVSVGLDYVTQQVKYSDTSAFV). The chain crosses the membrane as a helical span at residues 60-80 (YLVFSDILVAVYCIVVLVGLI). Over 81 to 94 (PAALGKSHPGKAGQ) the chain is Cytoplasmic. Residues 95 to 115 (WAIFIFDQVLAYVLLAAASSA) traverse the membrane as a helical segment. The Extracellular segment spans residues 116 to 144 (TEVAYLADKGMAKTSWEAVCPRFAHFCHT). The helical transmembrane segment at 145 to 165 (VMASISLSFVAVLLLALLAVV) threads the bilayer. The Cytoplasmic portion of the chain corresponds to 166-190 (SASGLFGRFYRRPLFAVKMRHNTLI).

Belongs to the Casparian strip membrane proteins (CASP) family. Homodimer and heterodimers.

The protein localises to the cell membrane. The protein is CASP-like protein 2U2 of Pteridium aquilinum subsp. aquilinum (Bracken fern).